The chain runs to 101 residues: Cyanovirin-N (101 aa).

Cystine bridges form between Cys-8-Cys-22 and Cys-58-Cys-73.

Belongs to the cyanovirin-N family. In solution exists as a metastable domain-swapped homodimer which very slowly converts into a more stable monomeric form at room temperature. Under physiological conditions it is unlikely that the dimeric species exists and indeed the monomer is more active against HIV. Interacts with HIV-1 gp120. Post-translationally, cleavage, or reduction and alkylation of the disulfide bonds results in the loss of anti-HIV activity.

Its function is as follows. Mannose-binding lectin. This Nostoc ellipsosporum protein is Cyanovirin-N.